A 234-amino-acid polypeptide reads, in one-letter code: Mannose/glucose-specific lectin Cramoll (234 aa).

Residues Glu8 and Asp10 each coordinate Mn(2+). Ca(2+) is bound by residues Asp10, Tyr12, Asn14, and Asp19. An a carbohydrate-binding site is contributed by Tyr12. Residues Asp19, His24, and Ser34 each coordinate Mn(2+). 99–100 is a binding site for a carbohydrate; sequence LY. Asp205 is a Ca(2+) binding site. Arg225 contributes to the a carbohydrate binding site.

Belongs to the leguminous lectin family. As to quaternary structure, homotetramer. Post-translationally, the alpha and beta chains are produced by partial proteolytic processing of the lectin precursor by an asparaginyl endopeptidase.

Its function is as follows. Glucose/D-mannose specific lectin. In Cratylia mollis (Camaratu bean), this protein is Mannose/glucose-specific lectin Cramoll.